The primary structure comprises 375 residues: Actin, cytoplasmic (375 aa).

The protein belongs to the actin family.

The protein resides in the cytoplasm. It is found in the cytoskeleton. It carries out the reaction ATP + H2O = ADP + phosphate + H(+). Its function is as follows. Actins are highly conserved proteins that are involved in various types of cell motility and are ubiquitously expressed in all eukaryotic cells. The protein is Actin, cytoplasmic (MIC-ACT-1) of Sterkiella nova (Ciliate).